Here is a 908-residue protein sequence, read N- to C-terminus: E3 ubiquitin-protein ligase ZNF598 (908 aa).

The RING-type zinc-finger motif lies at 27-67 (CVLCCGDLEATALGRCDHPVCYRCSTKMRVLCEQRYCAVCR). A C2H2-type zinc finger spans residues 185 to 208 (PLCKFCDERYLDNDELLKHLRRDH). 5 disordered regions span residues 292-338 (SRRS…KREE), 350-441 (SVAA…EEDF), 467-557 (PGPP…TVQG), 569-619 (SLLA…LEAP), and 719-744 (PSSH…TPGL). Ser295 is subject to Phosphoserine. Phosphotyrosine is present on Tyr304. Low complexity predominate over residues 313–329 (QGRAGRASGRGAQQNRR). Positions 358–385 (ETQRVEDREEGSRPKKEEAAARVPEEPR) are enriched in basic and acidic residues. Ser433 carries the phosphoserine modification. A compositionally biased stretch (low complexity) spans 482 to 501 (PALVSSAPKPSSAPSSLISA). Positions 529 to 538 (KAGKGSRGGR) are enriched in basic residues.

Belongs to the ZNF598/HEL2 family. In terms of assembly, interacts with the E2 ubiquitin-conjugating enzyme UBE2D3. Component of the 4EHP-GYF2 complex, at least composed of EIF4E2, GIGYF2 and ZNF598.

It is found in the cytoplasm. Its subcellular location is the cytosol. It carries out the reaction S-ubiquitinyl-[E2 ubiquitin-conjugating enzyme]-L-cysteine + [acceptor protein]-L-lysine = [E2 ubiquitin-conjugating enzyme]-L-cysteine + N(6)-ubiquitinyl-[acceptor protein]-L-lysine.. It participates in protein modification; protein ubiquitination. Functionally, E3 ubiquitin-protein ligase that plays a key role in the ribosome quality control (RQC), a pathway that takes place when a ribosome has stalled during translation, leading to degradation of nascent peptide chains. ZNF598 is activated when ribosomes are stalled within an mRNA following translation of prematurely polyadenylated mRNAs. Acts as a ribosome collision sensor: specifically recognizes and binds collided di-ribosome, which arises when a trailing ribosome encounters a slower leading ribosome, leading to terminally arrest translation. Following binding to colliding ribosomes, mediates monoubiquitination of 40S ribosomal proteins RPS10/eS10 and RPS3/uS3, and 'Lys-63'-linked polyubiquitination of RPS20/uS10. Polyubiquitination of RPS20/uS10 promotes recruitment of the RQT (ribosome quality control trigger) complex, which drives the disassembly of stalled ribosomes, followed by degradation of nascent peptides. E3 ubiquitin-protein ligase activity is dependent on the E2 ubiquitin-conjugating enzyme UBE2D3. Also acts as an adapter that recruits the 4EHP-GYF2 complex to mRNAs. Independently of its role in RQC, may also act as a negative regulator of interferon-stimulated gene (ISG) expression. This chain is E3 ubiquitin-protein ligase ZNF598, found in Mus musculus (Mouse).